The primary structure comprises 206 residues: Small ribosomal subunit protein uS4 (206 aa).

The 61-residue stretch at 96-156 (CRLDNVVYRM…EKAKNQLRIV (61 aa)) folds into the S4 RNA-binding domain.

This sequence belongs to the universal ribosomal protein uS4 family. In terms of assembly, part of the 30S ribosomal subunit. Contacts protein S5. The interaction surface between S4 and S5 is involved in control of translational fidelity.

One of the primary rRNA binding proteins, it binds directly to 16S rRNA where it nucleates assembly of the body of the 30S subunit. In terms of biological role, with S5 and S12 plays an important role in translational accuracy. This Pseudomonas fluorescens (strain ATCC BAA-477 / NRRL B-23932 / Pf-5) protein is Small ribosomal subunit protein uS4.